Reading from the N-terminus, the 417-residue chain is UPF0761 membrane protein CV_0810 (417 aa).

7 helical membrane passes run 52 to 72 (LLALVPLFTIALSVISAFPVF), 79 to 99 (FKIMLLSTLVPEFAGKVITVY), 110 to 130 (LTAAGIVMLGVTALMLMSTIE), 150 to 170 (MVYWTVLTLGPLVLGGSLLSW), 185 to 205 (LLASVLEAGGTIVLTALVLAL), 214 to 234 (FVPFRHAVWGALVTSVLLELT), and 258 to 278 (IPIFLLWVYCLWLVVLAGAVF).

This sequence belongs to the UPF0761 family.

Its subcellular location is the cell inner membrane. This is UPF0761 membrane protein CV_0810 from Chromobacterium violaceum (strain ATCC 12472 / DSM 30191 / JCM 1249 / CCUG 213 / NBRC 12614 / NCIMB 9131 / NCTC 9757 / MK).